Here is a 257-residue protein sequence, read N- to C-terminus: Small ribosomal subunit protein uS3 (257 aa).

Residues 39 to 112 form the KH type-2 domain; the sequence is IRKFLNKKYN…EIVFNVVEVR (74 aa). The disordered stretch occupies residues 217-257; it reads HEELRKERQSSASSNHGGGKRRPSRKGPRRSQEDAATEGGN. Basic residues predominate over residues 234–245; that stretch reads GGKRRPSRKGPR.

It belongs to the universal ribosomal protein uS3 family. Part of the 30S ribosomal subunit. Forms a tight complex with proteins S10 and S14.

In terms of biological role, binds the lower part of the 30S subunit head. Binds mRNA in the 70S ribosome, positioning it for translation. This is Small ribosomal subunit protein uS3 from Haploplasma axanthum (Acholeplasma axanthum).